A 31-amino-acid chain; its full sequence is Sarcolipin (31 aa).

Over 1 to 7 (MGINTRE) the chain is Cytoplasmic. A helical transmembrane segment spans residues 8–26 (LFLNFTIVLITVILMWLLV). Over 27-31 (RSYQY) the chain is Lumenal.

It belongs to the sarcolipin family. In terms of assembly, homooligomer. Can also form heterooligomers with other sarcoplasmic/endoplasmic reticulum calcium ATPase (SERCA) regulators ARLN, ERLN, PLN and STRIT1/DWORF. Monomer. Interacts with calcium ATPase ATP2A1/SERCA1. Interacts as a monomer with ATP2A2/SERCA2; the interaction decreases ATP2A2 Ca(2+) affinity. Interacts with VMP1; VMP1 competes with PLN and SLN to prevent them from forming an inhibitory complex with ATP2A2.

It is found in the sarcoplasmic reticulum membrane. The protein localises to the endoplasmic reticulum membrane. Its function is as follows. Reversibly inhibits the activity of ATP2A1/SERCA1 and ATP2A2/SERCA2 in sarcoplasmic reticulum by decreasing the apparent affinity of the ATPase for Ca(2+). Also inhibits the activity of ATP2A3/SERCA3. Modulates calcium re-uptake during muscle relaxation and plays an important role in calcium homeostasis in muscle. Required for muscle-based, non-shivering thermogenesis. This chain is Sarcolipin, found in Homo sapiens (Human).